The sequence spans 251 residues: Mycofactocin precursor peptide peptidase (251 aa).

A divalent metal cation contacts are provided by glutamate 38, histidine 40, aspartate 49, histidine 128, and glutamate 167.

Belongs to the creatininase superfamily. As to quaternary structure, homooctamer. The cofactor is Fe(2+). Requires Zn(2+) as cofactor.

The catalysed reaction is [mycofactocin precursor peptide]-C-terminal glycyl-N-{5-[(4-hydroxyphenyl)methyl]-4,4-dimethyl-2-oxopyrrolidin-3-yl}acetamide + H2O = [mycofactocin precursor peptide]-C-terminal glycine + 3-amino-5-[(4-hydroxyphenyl)methyl]-4,4-dimethyl-2-pyrrolidin-2-one. Peptidase involved in the biosynthesis of the enzyme cofactor mycofactocin (MFT). Catalyzes cleavage of the MftC-modified MftA peptide to liberate its final two residues, which consist of a cross-linked valine-decarboxylated tyrosine dipeptide (named 3-amino-5-[(4-hydroxyphenyl)methyl]-4,4-dimethyl-2-pyrrolidin-2-one or ADHP). This chain is Mycofactocin precursor peptide peptidase (mftE), found in Mycobacterium tuberculosis (strain CDC 1551 / Oshkosh).